Here is a 29-residue protein sequence, read N- to C-terminus: Cytochrome b6-f complex subunit 8 (29 aa).

Residues 3–23 traverse the membrane as a helical segment; it reads ILTLGWVSLLVVFTWSIAMVV.

It belongs to the PetN family. The 4 large subunits of the cytochrome b6-f complex are cytochrome b6, subunit IV (17 kDa polypeptide, PetD), cytochrome f and the Rieske protein, while the 4 small subunits are PetG, PetL, PetM and PetN. The complex functions as a dimer.

It is found in the cellular thylakoid membrane. In terms of biological role, component of the cytochrome b6-f complex, which mediates electron transfer between photosystem II (PSII) and photosystem I (PSI), cyclic electron flow around PSI, and state transitions. The chain is Cytochrome b6-f complex subunit 8 from Nostoc punctiforme (strain ATCC 29133 / PCC 73102).